The primary structure comprises 863 residues: Alanine--tRNA ligase (863 aa).

Residues histidine 552, histidine 556, cysteine 654, and histidine 658 each coordinate Zn(2+).

The protein belongs to the class-II aminoacyl-tRNA synthetase family. It depends on Zn(2+) as a cofactor.

It is found in the cytoplasm. The catalysed reaction is tRNA(Ala) + L-alanine + ATP = L-alanyl-tRNA(Ala) + AMP + diphosphate. In terms of biological role, catalyzes the attachment of alanine to tRNA(Ala) in a two-step reaction: alanine is first activated by ATP to form Ala-AMP and then transferred to the acceptor end of tRNA(Ala). Also edits incorrectly charged Ser-tRNA(Ala) and Gly-tRNA(Ala) via its editing domain. In Halorhodospira halophila (strain DSM 244 / SL1) (Ectothiorhodospira halophila (strain DSM 244 / SL1)), this protein is Alanine--tRNA ligase.